The following is a 248-amino-acid chain: PF03932 family protein CutC (248 aa).

Belongs to the CutC family. Homodimer.

The protein resides in the cytoplasm. The sequence is that of PF03932 family protein CutC from Escherichia coli O45:K1 (strain S88 / ExPEC).